Here is a 233-residue protein sequence, read N- to C-terminus: 2-phytyl-1,4-naphtoquinone methyltransferase (233 aa).

The protein belongs to the class I-like SAM-binding methyltransferase superfamily. MenG/UbiE family.

The enzyme catalyses demethylphylloquinol + S-adenosyl-L-methionine = phylloquinol + S-adenosyl-L-homocysteine + H(+). It functions in the pathway cofactor biosynthesis; phylloquinone biosynthesis. Its function is as follows. Methyltransferase required for the conversion of 2-phytyl-1,4-beta-naphthoquinol to phylloquinol. The protein is 2-phytyl-1,4-naphtoquinone methyltransferase of Synechococcus elongatus (strain ATCC 33912 / PCC 7942 / FACHB-805) (Anacystis nidulans R2).